The primary structure comprises 306 residues: MDEFEMIKRNTSEIISEEELREVLKKDEKSAYIGFEPSGKIHLGHYLQIKKMIDLQNAGFDIIILLADLHAYLNQKGELDEIRKIGDYNKKVFEAMGLKAKYVYGSEFQLDKDYTLNVYRLALKTTLKRARRSMELIAREDENPKVAEVIYPIMQVNDIHYLGVDVAVGGMEQRKIHMLARELLPKKVVCIHNPVLTGLDGEGKMSSSKGNFIAVDDSPEEIRAKIKKAYCPAGVVEGNPIMEIAKYFLEYPLTIKRPEKFGGDLTVNSYEELESLFKNKELHPMDLKNAVAEELIKILEPIRKRL.

Residues tyrosine 32 and glutamate 36 each contribute to the L-tyrosine site. The short motif at 37-45 (PSGKIHLGH) is the 'HIGH' region element. Residues 151–158 (YPIMQVND) are tyrosine. Glutamine 173 contributes to the L-tyrosine binding site. Positions 204–208 (KMSSS) match the 'KMSKS' region motif. Serine 207 is a binding site for ATP. Interaction with t-RNA regions lie at residues 228-231 (KAYC) and 283-288 (HPMDLK).

This sequence belongs to the class-I aminoacyl-tRNA synthetase family. TyrS type 3 subfamily. In terms of assembly, homodimer.

The protein localises to the cytoplasm. It carries out the reaction tRNA(Tyr) + L-tyrosine + ATP = L-tyrosyl-tRNA(Tyr) + AMP + diphosphate + H(+). Its function is as follows. Catalyzes the attachment of tyrosine to tRNA(Tyr) in a two-step reaction: tyrosine is first activated by ATP to form Tyr-AMP and then transferred to the acceptor end of tRNA(Tyr). This Methanocaldococcus jannaschii (strain ATCC 43067 / DSM 2661 / JAL-1 / JCM 10045 / NBRC 100440) (Methanococcus jannaschii) protein is Tyrosine--tRNA ligase (tyrS).